The sequence spans 128 residues: uncharacterized protein (128 aa).

Belongs to the HesB/IscA family.

This is an uncharacterized protein from Buchnera aphidicola subsp. Baizongia pistaciae (strain Bp).